The chain runs to 139 residues: Protein archease (139 aa).

Positions 12, 138, and 139 each coordinate Ca(2+).

This sequence belongs to the archease family.

In terms of biological role, activates the tRNA-splicing ligase complex by facilitating the enzymatic turnover of catalytic subunit RtcB. Acts by promoting the guanylylation of RtcB, a key intermediate step in tRNA ligation. Can also alter the NTP specificity of RtcB such that ATP, dGTP or ITP is used efficiently. The protein is Protein archease of Saccharolobus islandicus (strain M.16.27) (Sulfolobus islandicus).